The chain runs to 1293 residues: Enterobactin synthase component F (1293 aa).

Residues Met-1–Ala-301 form an elongation/condensation region. The interval Ser-482–Thr-887 is adenylation. Residues Ala-971–Glu-1046 form the Carrier domain. O-(pantetheine 4'-phosphoryl)serine is present on Ser-1006. The thioesterase stretch occupies residues Pro-1066 to Arg-1293. Catalysis depends on His-1271, which acts as the Proton acceptor; for thioesterase activity.

The protein belongs to the ATP-dependent AMP-binding enzyme family. EntF subfamily. As to quaternary structure, proteins EntB, EntD, EntE and EntF are the component of the enterobactin synthase. Components probably do not form a stable complex. EntF acts as a catalytic monomer. Pantetheine 4'-phosphate is required as a cofactor. Post-translationally, 4'-phosphopantetheine is transferred from CoA to a specific serine of apo-EntF by EntD. Holo-EntF so formed is then acylated with seryl-AMP.

The protein localises to the cytoplasm. It carries out the reaction 3 2,3-dihydroxybenzoate + 3 L-serine + 6 ATP = enterobactin + 6 AMP + 6 diphosphate + 4 H(+). The catalysed reaction is holo-[peptidyl-carrier protein] + L-serine + ATP = L-seryl-[peptidyl-carrier protein] + AMP + diphosphate. It participates in siderophore biosynthesis; enterobactin biosynthesis. Involved in the biosynthesis of the siderophore enterobactin (enterochelin), which is a macrocyclic trimeric lactone of N-(2,3-dihydroxybenzoyl)-serine. EntF catalyzes the activation of L-serine via ATP-dependent PPi exchange reaction to form seryladenylate. Activated L-serine is loaded onto the peptidyl carrier domain via a thioester linkage to the phosphopanthetheine moiety, forming seryl-S-Ppant-EntF. EntF acts then as the sole catalyst for the formation of the three amide and three ester linkages found in enterobactin, using seryladenylate and 2,3-dihydroxybenzoate-S-Ppant-EntB (DHB-S-Ppant-EntB) as substrates, via the formation of a DHB-Ser-S-Ppant-EntF intermediate. The chain is Enterobactin synthase component F (entF) from Escherichia coli O157:H7.